A 575-amino-acid chain; its full sequence is Sialate:O-sulfotransferase 1 (575 aa).

The Cytoplasmic portion of the chain corresponds to 1 to 14 (MAKPFFRLQKFLRR). A helical; Signal-anchor for type II membrane protein transmembrane segment spans residues 15-35 (TQFLLFFLTAAYLMTGSLLLL). Residues 36-575 (QRVRVALPQG…TGLPREYVPR (540 aa)) lie on the Extracellular side of the membrane. 2 WSC domains span residues 142 to 234 (RGTY…YRVD) and 245 to 340 (TATY…DTRC). N257 and N348 each carry an N-linked (GlcNAc...) asparagine glycan.

This sequence belongs to the WSCD family.

It localises to the golgi apparatus membrane. The catalysed reaction is a ganglioside GM1b + 3'-phosphoadenylyl sulfate = an 8-O-sulfo-ganglioside GM1b + adenosine 3',5'-bisphosphate + H(+). Functionally, sialate:O-sulfotransferase which catalyzes 8-O-sulfation at the Sia-glycan level using 3'-phosphoadenosine 5'-phosphosulfate (PAPS) as a donor, forming 8-O-sulfated Sia (Sia8S)-glycans. Displays selectivity toward glycolipids such as GM1 gangliosides. In Homo sapiens (Human), this protein is Sialate:O-sulfotransferase 1 (WSCD1).